Consider the following 57-residue polypeptide: Sec-independent protein translocase protein TatA (57 aa).

Residues 1–21 (MGISVWQLLIILLIVVMLFGT) form a helical membrane-spanning segment. A disordered region spans residues 37–57 (GFRKSVSDGETTTQAEASSRS). Residues 44-57 (DGETTTQAEASSRS) are compositionally biased toward polar residues.

Belongs to the TatA/E family. In terms of assembly, the Tat system comprises two distinct complexes: a TatABC complex, containing multiple copies of TatA, TatB and TatC subunits, and a separate TatA complex, containing only TatA subunits. Substrates initially bind to the TatABC complex, which probably triggers association of the separate TatA complex to form the active translocon.

It is found in the cell inner membrane. Part of the twin-arginine translocation (Tat) system that transports large folded proteins containing a characteristic twin-arginine motif in their signal peptide across membranes. TatA could form the protein-conducting channel of the Tat system. The protein is Sec-independent protein translocase protein TatA of Stutzerimonas stutzeri (Pseudomonas stutzeri).